We begin with the raw amino-acid sequence, 862 residues long: Leucine--tRNA ligase (862 aa).

Residues 42–52 (PYPSGRLHMGH) carry the 'HIGH' region motif. The short motif at 622–626 (KMSKS) is the 'KMSKS' region element. Position 625 (Lys-625) interacts with ATP.

It belongs to the class-I aminoacyl-tRNA synthetase family.

It localises to the cytoplasm. The catalysed reaction is tRNA(Leu) + L-leucine + ATP = L-leucyl-tRNA(Leu) + AMP + diphosphate. The sequence is that of Leucine--tRNA ligase from Vibrio campbellii (strain ATCC BAA-1116).